A 245-amino-acid chain; its full sequence is 1-(5-phosphoribosyl)-5-[(5-phosphoribosylamino)methylideneamino] imidazole-4-carboxamide isomerase (245 aa).

The active-site Proton acceptor is the Asp-7. Catalysis depends on Asp-129, which acts as the Proton donor.

It belongs to the HisA/HisF family.

The protein resides in the cytoplasm. It catalyses the reaction 1-(5-phospho-beta-D-ribosyl)-5-[(5-phospho-beta-D-ribosylamino)methylideneamino]imidazole-4-carboxamide = 5-[(5-phospho-1-deoxy-D-ribulos-1-ylimino)methylamino]-1-(5-phospho-beta-D-ribosyl)imidazole-4-carboxamide. It participates in amino-acid biosynthesis; L-histidine biosynthesis; L-histidine from 5-phospho-alpha-D-ribose 1-diphosphate: step 4/9. This is 1-(5-phosphoribosyl)-5-[(5-phosphoribosylamino)methylideneamino] imidazole-4-carboxamide isomerase from Salmonella agona (strain SL483).